A 386-amino-acid polypeptide reads, in one-letter code: Caspase-12 (386 aa).

The CARD domain occupies Met1–Asn91. At Ser84 the chain carries Phosphoserine. Residues His218 and Cys266 contribute to the active site.

It belongs to the peptidase C14A family. As to quaternary structure, heterotetramer that consists of two anti-parallel arranged heterodimers, each one formed by two subunits (Potential). May interact with TRAF2.

In terms of biological role, involved in the activation cascade of caspases responsible for apoptosis execution. This Canis lupus familiaris (Dog) protein is Caspase-12.